A 253-amino-acid polypeptide reads, in one-letter code: HTH-type transcriptional regulator YdeO (253 aa).

In terms of domain architecture, HTH araC/xylS-type spans 137–233 (GKVRNIVNMK…GNSPKRVSKE (97 aa)). 2 consecutive DNA-binding regions (H-T-H motif) follow at residues 154-175 (KDIC…KQEQ) and 200-223 (VNKI…RKHF).

Functionally, induces the expression of gadE and mdtEF. Could also regulate the expression of other genes involved in acid resistance. The polypeptide is HTH-type transcriptional regulator YdeO (Escherichia coli O157:H7).